The following is a 169-amino-acid chain: Oleosin Ara h 10.0101 (169 aa).

The next 2 helical transmembrane spans lie at 39-59 and 73-93; these read VIAV…AGLA and LFIL…LSVA. Residues 146 to 156 are compositionally biased toward basic and acidic residues; the sequence is KDVGQKTKEVG. The tract at residues 146-169 is disordered; the sequence is KDVGQKTKEVGQEIQTKAQDSKRT.

This sequence belongs to the oleosin family. As to expression, expressed in seeds (at protein level).

It is found in the lipid droplet. The protein resides in the membrane. May have a structural role to stabilize the lipid body during desiccation of the seed by preventing coalescence of the oil. Probably interacts with both lipid and phospholipid moieties of lipid bodies. May also provide recognition signals for specific lipase anchorage in lipolysis during seedling growth. The chain is Oleosin Ara h 10.0101 from Arachis hypogaea (Peanut).